Consider the following 181-residue polypeptide: ATP-dependent protease subunit HslV (181 aa).

Threonine 7 is a catalytic residue. Residues alanine 162, cysteine 165, and threonine 168 each contribute to the Na(+) site.

The protein belongs to the peptidase T1B family. HslV subfamily. In terms of assembly, a double ring-shaped homohexamer of HslV is capped on each side by a ring-shaped HslU homohexamer. The assembly of the HslU/HslV complex is dependent on binding of ATP.

The protein localises to the cytoplasm. It carries out the reaction ATP-dependent cleavage of peptide bonds with broad specificity.. With respect to regulation, allosterically activated by HslU binding. Protease subunit of a proteasome-like degradation complex believed to be a general protein degrading machinery. This Coxiella burnetii (strain Dugway 5J108-111) protein is ATP-dependent protease subunit HslV.